The following is a 150-amino-acid chain: Large ribosomal subunit protein bL9 (150 aa).

It belongs to the bacterial ribosomal protein bL9 family.

Functionally, binds to the 23S rRNA. The sequence is that of Large ribosomal subunit protein bL9 from Streptococcus mutans serotype c (strain ATCC 700610 / UA159).